We begin with the raw amino-acid sequence, 2925 residues long: Serine/threonine-protein kinase tel1 (2925 aa).

A disordered region spans residues Glu-172 to Pro-211. The span at Asp-174 to Leu-186 shows a compositional bias: basic and acidic residues. Positions Thr-195–Thr-204 are enriched in polar residues. Positions Glu-1844–Ser-2467 constitute an FAT domain. Positions Tyr-2571–Arg-2882 constitute a PI3K/PI4K catalytic domain. Residues Ile-2577–Ala-2583 are G-loop. The interval Gly-2749–Asn-2757 is catalytic loop. The interval His-2769–Thr-2793 is activation loop. The tract at residues Gln-2853–Glu-2879 is disordered. An FATC domain is found at Lys-2893–Ala-2925.

The protein belongs to the PI3/PI4-kinase family. ATM subfamily. As to quaternary structure, associates with DNA double-strand breaks.

The protein localises to the nucleus. It is found in the chromosome. It localises to the telomere. It carries out the reaction L-seryl-[protein] + ATP = O-phospho-L-seryl-[protein] + ADP + H(+). The enzyme catalyses L-threonyl-[protein] + ATP = O-phospho-L-threonyl-[protein] + ADP + H(+). Functionally, serine/threonine protein kinase which activates checkpoint signaling upon genotoxic stresses such as ionizing radiation (IR), ultraviolet light (UV), or DNA replication stalling, thereby acting as a DNA damage sensor. Recognizes the substrate consensus sequence [ST]-Q. Phosphorylates histone H2A to form H2AS128ph (gamma-H2A) at sites of DNA damage, involved in the regulation of DNA damage response mechanism. Required for the control of telomere length and genome stability. This chain is Serine/threonine-protein kinase tel1 (tel1), found in Aspergillus oryzae (strain ATCC 42149 / RIB 40) (Yellow koji mold).